Reading from the N-terminus, the 502-residue chain is Glucose-6-phosphate isomerase (502 aa).

Glu-331 functions as the Proton donor in the catalytic mechanism. Residues His-362 and Lys-471 contribute to the active site.

The protein belongs to the GPI family.

The protein resides in the cytoplasm. The catalysed reaction is alpha-D-glucose 6-phosphate = beta-D-fructose 6-phosphate. Its pathway is carbohydrate biosynthesis; gluconeogenesis. The protein operates within carbohydrate degradation; glycolysis; D-glyceraldehyde 3-phosphate and glycerone phosphate from D-glucose: step 2/4. Its function is as follows. Catalyzes the reversible isomerization of glucose-6-phosphate to fructose-6-phosphate. The sequence is that of Glucose-6-phosphate isomerase from Xylella fastidiosa (strain M12).